The sequence spans 498 residues: Cytoskeletal signaling protein slm1 (498 aa).

The tract at residues 1–23 is disordered; that stretch reads MELSGKSEFPTRTEIPNQASNGD. Phosphoserine is present on residues Ser-175 and Ser-312. The PH domain occupies 300–405; that stretch reads VPIMAGYLIR…WWEALNTHIA (106 aa). Residues 416 to 475 form a disordered region; sequence ANGPSAVSDSDDDDDDPNDFRPAVERQSSTMNTRMSQPSSAVNTNRSYGSEQIPSYADSQ. Residues 441–475 are compositionally biased toward polar residues; that stretch reads RQSSTMNTRMSQPSSAVNTNRSYGSEQIPSYADSQ.

It is found in the cell tip. Functionally, effector of the TORC2- and calcineurin-signaling pathways. Mediates actin polarization via inhibition of calcineurin-dependent transcription. May play a role in the response to the disruption of sphingolipid synthesis, where dephosphorylation of slm1 leads to the activation and phosphorylation of ypk1 through the TORC2 and PKH1 pathways, which in turn phosphorylates orm1 and lag1 to activate sphingolipid synthesis. The polypeptide is Cytoskeletal signaling protein slm1 (slm1) (Schizosaccharomyces pombe (strain 972 / ATCC 24843) (Fission yeast)).